The chain runs to 384 residues: Viral protein 1 (384 aa).

The chain is Viral protein 1 from Chaetoceros setoense (Chaetoceros setoense DNA virus).